The sequence spans 444 residues: Chromosome partition protein MukF (444 aa).

The segment at 212 to 240 (LDETSGNLRELQDTLNAAGDKLQAQLLRI) is leucine-zipper.

This sequence belongs to the MukF family. Interacts, and probably forms a ternary complex, with MukE and MukB via its C-terminal region. The complex formation is stimulated by calcium or magnesium. It is required for an interaction between MukE and MukB.

The protein localises to the cytoplasm. It is found in the nucleoid. Functionally, involved in chromosome condensation, segregation and cell cycle progression. May participate in facilitating chromosome segregation by condensation DNA from both sides of a centrally located replisome during cell division. Not required for mini-F plasmid partitioning. Probably acts via its interaction with MukB and MukE. Overexpression results in anucleate cells. It has a calcium binding activity. The polypeptide is Chromosome partition protein MukF (Haemophilus influenzae (strain PittEE)).